We begin with the raw amino-acid sequence, 178 residues long: Large ribosomal subunit protein uL6 (178 aa).

Belongs to the universal ribosomal protein uL6 family. In terms of assembly, part of the 50S ribosomal subunit.

This protein binds to the 23S rRNA, and is important in its secondary structure. It is located near the subunit interface in the base of the L7/L12 stalk, and near the tRNA binding site of the peptidyltransferase center. The chain is Large ribosomal subunit protein uL6 from Corynebacterium kroppenstedtii (strain DSM 44385 / JCM 11950 / CIP 105744 / CCUG 35717).